Consider the following 150-residue polypeptide: Ubiquitin-conjugating enzyme E2 3 (150 aa).

One can recognise a UBC core domain in the interval 4–150 (PAKKRLMWDF…VIEIVEQSYV (147 aa)). The active-site Glycyl thioester intermediate is the Cys-88.

This sequence belongs to the ubiquitin-conjugating enzyme family. As to expression, expressed in all tissues examined. Lower levels found in leaves.

It carries out the reaction S-ubiquitinyl-[E1 ubiquitin-activating enzyme]-L-cysteine + [E2 ubiquitin-conjugating enzyme]-L-cysteine = [E1 ubiquitin-activating enzyme]-L-cysteine + S-ubiquitinyl-[E2 ubiquitin-conjugating enzyme]-L-cysteine.. It functions in the pathway protein modification; protein ubiquitination. Its function is as follows. Accepts the ubiquitin from the E1 complex and catalyzes its covalent attachment to other proteins. This is Ubiquitin-conjugating enzyme E2 3 (UBC3) from Arabidopsis thaliana (Mouse-ear cress).